A 274-amino-acid chain; its full sequence is NH(3)-dependent NAD(+) synthetase (274 aa).

An ATP-binding site is contributed by 46-53; it reads GISGGQDS. Asp-52 is a Mg(2+) binding site. Arg-140 contributes to the deamido-NAD(+) binding site. Thr-160 is an ATP binding site. Mg(2+) is bound at residue Glu-165. Positions 173 and 180 each coordinate deamido-NAD(+). The ATP site is built by Lys-189 and Thr-211. 260 to 261 is a binding site for deamido-NAD(+); it reads HK.

The protein belongs to the NAD synthetase family. In terms of assembly, homodimer.

It carries out the reaction deamido-NAD(+) + NH4(+) + ATP = AMP + diphosphate + NAD(+) + H(+). It participates in cofactor biosynthesis; NAD(+) biosynthesis; NAD(+) from deamido-NAD(+) (ammonia route): step 1/1. Functionally, catalyzes the ATP-dependent amidation of deamido-NAD to form NAD. Uses ammonia as a nitrogen source. The polypeptide is NH(3)-dependent NAD(+) synthetase (Streptococcus equi subsp. zooepidemicus (strain H70)).